Consider the following 476-residue polypeptide: Inosine-5'-monophosphate dehydrogenase (476 aa).

CBS domains follow at residues 93 to 151 and 152 to 211; these read IIRD…VKDI and MTKD…TRDE. Residues Asp-242 and 292 to 294 contribute to the NAD(+) site; that span reads GIG. K(+) is bound by residues Gly-294 and Gly-296. IMP is bound at residue Ser-297. Residue Cys-299 participates in K(+) binding. Cys-299 functions as the Thioimidate intermediate in the catalytic mechanism. IMP-binding positions include 334-336, 357-358, and 381-385; these read DGG, GY, and YRGMG. Arg-398 (proton acceptor) is an active-site residue. An IMP-binding site is contributed by Glu-408. K(+) is bound at residue Glu-462.

Belongs to the IMPDH/GMPR family. In terms of assembly, homotetramer. It depends on K(+) as a cofactor.

The catalysed reaction is IMP + NAD(+) + H2O = XMP + NADH + H(+). It functions in the pathway purine metabolism; XMP biosynthesis via de novo pathway; XMP from IMP: step 1/1. With respect to regulation, mycophenolic acid (MPA) is a non-competitive inhibitor that prevents formation of the closed enzyme conformation by binding to the same site as the amobile flap. In contrast, mizoribine monophosphate (MZP) is a competitive inhibitor that induces the closed conformation. MPA is a potent inhibitor of mammalian IMPDHs but a poor inhibitor of the bacterial enzymes. MZP is a more potent inhibitor of bacterial IMPDH. Its function is as follows. Catalyzes the conversion of inosine 5'-phosphate (IMP) to xanthosine 5'-phosphate (XMP), the first committed and rate-limiting step in the de novo synthesis of guanine nucleotides, and therefore plays an important role in the regulation of cell growth. This Korarchaeum cryptofilum (strain OPF8) protein is Inosine-5'-monophosphate dehydrogenase.